Reading from the N-terminus, the 217-residue chain is Thiopurine S-methyltransferase (217 aa).

Positions 11, 46, 67, and 122 each coordinate S-adenosyl-L-methionine.

Belongs to the class I-like SAM-binding methyltransferase superfamily. TPMT family.

Its subcellular location is the cytoplasm. It carries out the reaction S-adenosyl-L-methionine + a thiopurine = S-adenosyl-L-homocysteine + a thiopurine S-methylether.. The sequence is that of Thiopurine S-methyltransferase from Vibrio vulnificus (strain YJ016).